Reading from the N-terminus, the 1265-residue chain is Kinesin-related protein 13 (1265 aa).

The Kinesin motor domain occupies 23 to 350; sequence NIQAFVRVRP…LEYALKAKNI (328 aa). 106-113 provides a ligand contact to ATP; it reads GQTGTGKT. Residues 331 to 459 are a coiled coil; the sequence is LVNLEETINT…KQQQEKQKFI (129 aa). Disordered stretches follow at residues 918-1026, 1085-1119, 1127-1146, 1158-1214, and 1245-1265; these read KSGE…QPLI, SLVN…LSQL, LQPQ…LNGS, LLDD…NQSL, and FGGG…TPLK. Positions 930–951 are enriched in low complexity; the sequence is IPSPISTSSSSSSSSSISSIHS. Polar residues-rich tracts occupy residues 960-980, 1003-1026, and 1085-1097; these read HQSI…SINC, LNLN…QPLI, and SLVN…SPKL. 2 stretches are compositionally biased toward low complexity: residues 1100–1119 and 1128–1146; these read QKIL…LSQL and QPQQ…LNGS. The span at 1158–1169 shows a compositional bias: acidic residues; the sequence is LLDDDSDSDNSD. A compositionally biased stretch (low complexity) spans 1174-1195; the sequence is SLLSSNKKSSRASKNAVVSKKV. The span at 1250–1265 shows a compositional bias: polar residues; the sequence is TISSKLKSLKQQTPLK.

It belongs to the TRAFAC class myosin-kinesin ATPase superfamily. Kinesin family. BimC subfamily.

The protein resides in the cytoplasm. The protein localises to the cytoskeleton. Microtubule-associated force-producing protein that plays a role in organelle transport. Its motor activity is directed toward the microtubule's plus end. Cooperates with dynein to control the spindle elongation rate, but is dispensable for mitosis. In Dictyostelium discoideum (Social amoeba), this protein is Kinesin-related protein 13 (kif13).